We begin with the raw amino-acid sequence, 349 residues long: Methionine import ATP-binding protein MetN (349 aa).

One can recognise an ABC transporter domain in the interval 5-245 (IDLKNITVQF…PQKQLTRQFV (241 aa)). 37 to 44 (GFSGAGKS) is a binding site for ATP.

This sequence belongs to the ABC transporter superfamily. Methionine importer (TC 3.A.1.24) family. As to quaternary structure, the complex is composed of two ATP-binding proteins (MetN), two transmembrane proteins (MetI) and a solute-binding protein (MetQ).

It localises to the cell membrane. It carries out the reaction L-methionine(out) + ATP + H2O = L-methionine(in) + ADP + phosphate + H(+). The enzyme catalyses D-methionine(out) + ATP + H2O = D-methionine(in) + ADP + phosphate + H(+). In terms of biological role, part of the ABC transporter complex MetNIQ involved in methionine import. Responsible for energy coupling to the transport system. In Lactobacillus johnsonii (strain CNCM I-12250 / La1 / NCC 533), this protein is Methionine import ATP-binding protein MetN.